A 271-amino-acid chain; its full sequence is Formamidopyrimidine-DNA glycosylase (271 aa).

The active-site Schiff-base intermediate with DNA is Pro2. The active-site Proton donor is Glu3. Catalysis depends on Lys57, which acts as the Proton donor; for beta-elimination activity. DNA is bound by residues His90, Arg109, and Lys151. The FPG-type zinc-finger motif lies at 236–270; it reads HVYGRGGESCTQCGNLLSEIKLGQRATVFCGLCQT. Arg260 (proton donor; for delta-elimination activity) is an active-site residue.

The protein belongs to the FPG family. Monomer. The cofactor is Zn(2+).

The catalysed reaction is Hydrolysis of DNA containing ring-opened 7-methylguanine residues, releasing 2,6-diamino-4-hydroxy-5-(N-methyl)formamidopyrimidine.. The enzyme catalyses 2'-deoxyribonucleotide-(2'-deoxyribose 5'-phosphate)-2'-deoxyribonucleotide-DNA = a 3'-end 2'-deoxyribonucleotide-(2,3-dehydro-2,3-deoxyribose 5'-phosphate)-DNA + a 5'-end 5'-phospho-2'-deoxyribonucleoside-DNA + H(+). Involved in base excision repair of DNA damaged by oxidation or by mutagenic agents. Acts as a DNA glycosylase that recognizes and removes damaged bases. Has a preference for oxidized purines, such as 7,8-dihydro-8-oxoguanine (8-oxoG). Has AP (apurinic/apyrimidinic) lyase activity and introduces nicks in the DNA strand. Cleaves the DNA backbone by beta-delta elimination to generate a single-strand break at the site of the removed base with both 3'- and 5'-phosphates. The protein is Formamidopyrimidine-DNA glycosylase of Shewanella woodyi (strain ATCC 51908 / MS32).